The following is a 1233-amino-acid chain: ATP-dependent helicase/nuclease subunit A (1233 aa).

One can recognise a UvrD-like helicase ATP-binding domain in the interval 3–474; sequence TKWTEEQKQA…ILLYKNFRSR (472 aa). 24–31 contributes to the ATP binding site; it reads AAAGSGKT. In terms of domain architecture, UvrD-like helicase C-terminal spans 518–809; that stretch reads VTGGAVELHL…RIMSIHKSKG (292 aa). A disordered region spans residues 533-555; sequence VEEEVEEKEEEKNEEKDFEEEEE.

The protein belongs to the helicase family. AddA subfamily. In terms of assembly, heterodimer of AddA and AddB/RexB. Requires Mg(2+) as cofactor.

The catalysed reaction is Couples ATP hydrolysis with the unwinding of duplex DNA by translocating in the 3'-5' direction.. The enzyme catalyses ATP + H2O = ADP + phosphate + H(+). Its function is as follows. The heterodimer acts as both an ATP-dependent DNA helicase and an ATP-dependent, dual-direction single-stranded exonuclease. Recognizes the chi site generating a DNA molecule suitable for the initiation of homologous recombination. The AddA nuclease domain is required for chi fragment generation; this subunit has the helicase and 3' -&gt; 5' nuclease activities. The chain is ATP-dependent helicase/nuclease subunit A from Thermoanaerobacter pseudethanolicus (strain ATCC 33223 / 39E) (Clostridium thermohydrosulfuricum).